A 552-amino-acid polypeptide reads, in one-letter code: Oxygen-dependent choline dehydrogenase (552 aa).

7–36 (DYIIIGAGSAGNVLAARLTEDKDTTVLLLE) is a binding site for FAD. His-477 acts as the Proton acceptor in catalysis.

The protein belongs to the GMC oxidoreductase family. It depends on FAD as a cofactor.

It catalyses the reaction choline + A = betaine aldehyde + AH2. The enzyme catalyses betaine aldehyde + NAD(+) + H2O = glycine betaine + NADH + 2 H(+). Its pathway is amine and polyamine biosynthesis; betaine biosynthesis via choline pathway; betaine aldehyde from choline (cytochrome c reductase route): step 1/1. Its function is as follows. Involved in the biosynthesis of the osmoprotectant glycine betaine. Catalyzes the oxidation of choline to betaine aldehyde and betaine aldehyde to glycine betaine at the same rate. In Acinetobacter baumannii (strain AB307-0294), this protein is Oxygen-dependent choline dehydrogenase.